Reading from the N-terminus, the 88-residue chain is MPQIIAKCNGRVLVGTVISDKNDKTIIVHVETLVKHPLLKKFIRHRKKFTAHDPLNECSIGDTVKIIEFRPLSRNKRWHLVAILEKAV.

This sequence belongs to the universal ribosomal protein uS17 family. In terms of assembly, part of the 30S ribosomal subunit.

Functionally, one of the primary rRNA binding proteins, it binds specifically to the 5'-end of 16S ribosomal RNA. The protein is Small ribosomal subunit protein uS17 of Lawsonia intracellularis (strain PHE/MN1-00).